Here is a 203-residue protein sequence, read N- to C-terminus: Holliday junction branch migration complex subunit RuvA (203 aa).

Positions 1–64 are domain I; that stretch reads MIGRLRGIIL…EDAQLLYGFN (64 aa). Positions 65-142 are domain II; the sequence is NKQERTLFKE…KGLHGDLFTP (78 aa). Positions 143–154 are flexible linker; that stretch reads AADLVLTSPASP. Residues 155 to 203 are domain III; it reads ATDDAEQEAVAALVALGYKPQEASRMVSKIARPDASSETLIREALRAAL.

Belongs to the RuvA family. As to quaternary structure, homotetramer. Forms an RuvA(8)-RuvB(12)-Holliday junction (HJ) complex. HJ DNA is sandwiched between 2 RuvA tetramers; dsDNA enters through RuvA and exits via RuvB. An RuvB hexamer assembles on each DNA strand where it exits the tetramer. Each RuvB hexamer is contacted by two RuvA subunits (via domain III) on 2 adjacent RuvB subunits; this complex drives branch migration. In the full resolvosome a probable DNA-RuvA(4)-RuvB(12)-RuvC(2) complex forms which resolves the HJ.

Its subcellular location is the cytoplasm. The RuvA-RuvB-RuvC complex processes Holliday junction (HJ) DNA during genetic recombination and DNA repair, while the RuvA-RuvB complex plays an important role in the rescue of blocked DNA replication forks via replication fork reversal (RFR). RuvA specifically binds to HJ cruciform DNA, conferring on it an open structure. The RuvB hexamer acts as an ATP-dependent pump, pulling dsDNA into and through the RuvAB complex. HJ branch migration allows RuvC to scan DNA until it finds its consensus sequence, where it cleaves and resolves the cruciform DNA. The polypeptide is Holliday junction branch migration complex subunit RuvA (Citrobacter koseri (strain ATCC BAA-895 / CDC 4225-83 / SGSC4696)).